Here is a 312-residue protein sequence, read N- to C-terminus: MMSVLVKEVIEKLRLDIVYGEPELLEKEINTADITRPGLEMTGYFDYYTPERIQLLGMKEWSYLISMPSNSRYEVLKKMFLPETPAVIVARGLVVPEEMLKAARECKIAILTSRAATSRLSGELSSYLDSRLAERTSVHGVLMDIYGMGVLIQGDSGIGKSETGLELVKRGHRLVADDRVDIFAKDEITLWGEPAEILKHLIEIRGVGIIDVMSLYGASAVKDSSQVQLAVYLENYDTHKTFDRLGNNAEELEVSGVAIPRIRIPVKTGRNISVVIEAAAMNYRAKEMGFDATRLFDERLTSLIARNEVQNA.

Catalysis depends on residues H139 and K160. Position 154-161 (154-161 (GDSGIGKS)) interacts with ATP. S161 provides a ligand contact to Mg(2+). D178 (proton acceptor; for phosphorylation activity. Proton donor; for dephosphorylation activity) is an active-site residue. Residues 202 to 211 (IEIRGVGIID) form an important for the catalytic mechanism of both phosphorylation and dephosphorylation region. E203 provides a ligand contact to Mg(2+). R244 is a catalytic residue. Residues 265-270 (PVKTGR) are important for the catalytic mechanism of dephosphorylation.

The protein belongs to the HPrK/P family. In terms of assembly, homohexamer. It depends on Mg(2+) as a cofactor.

It catalyses the reaction [HPr protein]-L-serine + ATP = [HPr protein]-O-phospho-L-serine + ADP + H(+). The enzyme catalyses [HPr protein]-O-phospho-L-serine + phosphate + H(+) = [HPr protein]-L-serine + diphosphate. Catalyzes the ATP- as well as the pyrophosphate-dependent phosphorylation of a specific serine residue in HPr, a phosphocarrier protein of the phosphoenolpyruvate-dependent sugar phosphotransferase system (PTS). HprK/P also catalyzes the pyrophosphate-producing, inorganic phosphate-dependent dephosphorylation (phosphorolysis) of seryl-phosphorylated HPr (P-Ser-HPr). The two antagonistic activities of HprK/P are regulated by several intracellular metabolites, which change their concentration in response to the absence or presence of rapidly metabolisable carbon sources (glucose, fructose, etc.) in the growth medium. Therefore, by controlling the phosphorylation state of HPr, HPrK/P is a sensor enzyme that plays a major role in the regulation of carbon metabolism and sugar transport: it mediates carbon catabolite repression (CCR), and regulates PTS-catalyzed carbohydrate uptake and inducer exclusion. The sequence is that of HPr kinase/phosphorylase from Streptococcus pneumoniae serotype 4 (strain ATCC BAA-334 / TIGR4).